The chain runs to 165 residues: MPSSYSFDVVSEFDQQELVNAIDQLRREVDQRYDLKDSKTKIDIKEDELSIVSLSDMTIESVKDILLQKATKRNLSLKIFDFQKIETIGGNMVMQIVKLKKGLSQEISKKLSKLVRDNMKKVTASIQGDSLRITGKNKDDLQAAINLIKKQEEEFDIALQFQNYR.

Belongs to the YajQ family.

In terms of biological role, nucleotide-binding protein. This chain is Nucleotide-binding protein PMN2A_1813, found in Prochlorococcus marinus (strain NATL2A).